The following is a 299-amino-acid chain: Probable lipid kinase YegS (299 aa).

Residues 2–133 form the DAGKc domain; it reads ANFPASLLIL…IDMARVNDKT (132 aa). ATP-binding positions include threonine 40, 66–72, and threonine 95; that span reads GDGTINE. Mg(2+)-binding residues include leucine 215, aspartate 218, and leucine 220. The active-site Proton acceptor is the glutamate 271.

This sequence belongs to the diacylglycerol/lipid kinase family. YegS lipid kinase subfamily. Requires Mg(2+) as cofactor. It depends on Ca(2+) as a cofactor.

It localises to the cytoplasm. Its function is as follows. Probably phosphorylates lipids; the in vivo substrate is unknown. This is Probable lipid kinase YegS from Salmonella agona (strain SL483).